Reading from the N-terminus, the 122-residue chain is Large ribosomal subunit protein uL14 (122 aa).

This sequence belongs to the universal ribosomal protein uL14 family. As to quaternary structure, part of the 50S ribosomal subunit. Forms a cluster with proteins L3 and L19. In the 70S ribosome, L14 and L19 interact and together make contacts with the 16S rRNA in bridges B5 and B8. Interacts with ribosomal silencing factor RsfS, which may inhibit ribosomal subunit association.

In terms of biological role, binds to 23S rRNA. Forms part of two intersubunit bridges in the 70S ribosome. This chain is Large ribosomal subunit protein uL14, found in Treponema pallidum (strain Nichols).